Consider the following 405-residue polypeptide: Tryptophan synthase beta chain (405 aa).

At Lys-98 the chain carries N6-(pyridoxal phosphate)lysine.

This sequence belongs to the TrpB family. Tetramer of two alpha and two beta chains. Requires pyridoxal 5'-phosphate as cofactor.

The catalysed reaction is (1S,2R)-1-C-(indol-3-yl)glycerol 3-phosphate + L-serine = D-glyceraldehyde 3-phosphate + L-tryptophan + H2O. The protein operates within amino-acid biosynthesis; L-tryptophan biosynthesis; L-tryptophan from chorismate: step 5/5. Its function is as follows. The beta subunit is responsible for the synthesis of L-tryptophan from indole and L-serine. The sequence is that of Tryptophan synthase beta chain from Bradyrhizobium diazoefficiens (strain JCM 10833 / BCRC 13528 / IAM 13628 / NBRC 14792 / USDA 110).